The following is a 321-amino-acid chain: 2,3,4,5-tetrahydropyridine-2,6-dicarboxylate N-succinyltransferase (321 aa).

The Mg(2+) site is built by aspartate 166 and glutamate 183. Catalysis depends on glutamate 199, which acts as the Acyl-anhydride intermediate. Residues arginine 201, glycine 216, serine 219, alanine 242, 257–258 (EA), glycine 265, lysine 281, and 294–297 (RRNS) contribute to the succinyl-CoA site.

It belongs to the type 2 tetrahydrodipicolinate N-succinyltransferase family. As to quaternary structure, homotrimer.

The protein localises to the cytoplasm. It catalyses the reaction (S)-2,3,4,5-tetrahydrodipicolinate + succinyl-CoA + H2O = (S)-2-succinylamino-6-oxoheptanedioate + CoA. It functions in the pathway amino-acid biosynthesis; L-lysine biosynthesis via DAP pathway; LL-2,6-diaminopimelate from (S)-tetrahydrodipicolinate (succinylase route): step 1/3. Its function is as follows. Catalyzes the conversion of the cyclic tetrahydrodipicolinate (THDP) into the acyclic N-succinyl-L-2-amino-6-oxopimelate using succinyl-CoA. The chain is 2,3,4,5-tetrahydropyridine-2,6-dicarboxylate N-succinyltransferase from Rothia mucilaginosa (strain DY-18) (Stomatococcus mucilaginosus).